Reading from the N-terminus, the 34-residue chain is Photosystem I reaction center subunit XII (34 aa).

A helical membrane pass occupies residues 4-24; it reads VLSAPEVFIALVVAAHAAVLA.

Belongs to the PsaM family.

It localises to the cellular thylakoid membrane. This chain is Photosystem I reaction center subunit XII, found in Synechococcus sp. (strain CC9605).